A 76-amino-acid polypeptide reads, in one-letter code: Small ribosomal subunit protein uS17 (76 aa).

Belongs to the universal ribosomal protein uS17 family. In terms of assembly, part of the 30S ribosomal subunit.

In terms of biological role, one of the primary rRNA binding proteins, it binds specifically to the 5'-end of 16S ribosomal RNA. This Dinoroseobacter shibae (strain DSM 16493 / NCIMB 14021 / DFL 12) protein is Small ribosomal subunit protein uS17.